The sequence spans 477 residues: MALTTKPHHLQRSFLSPSRVSGERYLESAPSCLRFRRSGVQCSVVAKECRVKGVKARQIIDSRGNPTVEVDLITDDLYRSAVPSGASTGIYEALELRDGDKSVYGGKGVLQAIKNINELVAPKLIGVDVRNQADVDALMLELDGTPNKSKLGANAILGVSLSVCRAGAGAKGVPLYKHIQETSGTKELVMPVPAFNVINGGSHAGNSLAMQEFMILPVGATSFSEAFQMGSEVYHTLKGIIKTKYGQDACNVGDEGGFAPNVQDNREGLVLLIDAIEKAGYTGKIKIGMDVAASEFFMKDGRYDLNFKKQPNDGAHVLSAESLADLYREFIKDFPIVSIEDPFDQDDWSSWASLQSSVDIQLVGDDLLVTNPKRIAEAIKKQSCNALLLKVNQIGTVTESIQAALDSKAAGWGVMVSHRSGETEDNFIADLSVGLASGQIKTGAPCRSERLSKYNQLLRIEEELGNVRYAGEAFRSP.

The transit peptide at 1 to 41 (MALTTKPHHLQRSFLSPSRVSGERYLESAPSCLRFRRSGVQ) directs the protein to the chloroplast. Positions 203 and 212 each coordinate substrate. Residue E255 is the Proton donor of the active site. Residues D290, E340, and D365 each coordinate Mg(2+). Residues E340 and D365 each coordinate substrate. The Proton acceptor role is filled by K390. Residues 417 to 420 (SHRS) and K441 each bind substrate. At S476 the chain carries Phosphoserine.

The protein belongs to the enolase family. It depends on Mg(2+) as a cofactor. In terms of tissue distribution, highly expressed in young roots, young siliques, and shoot apex. Lowly expressed in young leaves, stems and cotyledons.

It localises to the plastid. Its subcellular location is the chloroplast. It catalyses the reaction (2R)-2-phosphoglycerate = phosphoenolpyruvate + H2O. It functions in the pathway carbohydrate degradation; glycolysis; pyruvate from D-glyceraldehyde 3-phosphate: step 4/5. The chain is Enolase 1, chloroplastic (ENO1) from Arabidopsis thaliana (Mouse-ear cress).